The sequence spans 408 residues: Argininosuccinate synthase (408 aa).

ATP is bound at residue 8-16; sequence AYSGGLDTS. Tyrosine 86 contributes to the L-citrulline binding site. ATP is bound at residue glycine 116. L-aspartate-binding residues include threonine 118, asparagine 122, and aspartate 123. Asparagine 122 is an L-citrulline binding site. L-citrulline contacts are provided by arginine 126, serine 174, glutamate 259, and tyrosine 271.

Belongs to the argininosuccinate synthase family. Type 1 subfamily. In terms of assembly, homotetramer.

The protein resides in the cytoplasm. The enzyme catalyses L-citrulline + L-aspartate + ATP = 2-(N(omega)-L-arginino)succinate + AMP + diphosphate + H(+). It participates in amino-acid biosynthesis; L-arginine biosynthesis; L-arginine from L-ornithine and carbamoyl phosphate: step 2/3. The chain is Argininosuccinate synthase from Leuconostoc mesenteroides subsp. mesenteroides (strain ATCC 8293 / DSM 20343 / BCRC 11652 / CCM 1803 / JCM 6124 / NCDO 523 / NBRC 100496 / NCIMB 8023 / NCTC 12954 / NRRL B-1118 / 37Y).